Here is a 78-residue protein sequence, read N- to C-terminus: Neurogranin (78 aa).

M1 bears the N-acetylmethionine mark. The 24-residue stretch at 26-49 folds into the IQ domain; the sequence is ANAAAAKIQASFRGHMARKKIKSG. S36 carries the post-translational modification Phosphoserine; by PHK and PKC. The segment at 38-78 is disordered; that stretch reads RGHMARKKIKSGERGRKGPGPGGPGGAGGARGGAGGGPSGD. Positions 50-78 constitute a Collagen-like domain; it reads ERGRKGPGPGGPGGAGGARGGAGGGPSGD. Positions 55 to 78 are enriched in gly residues; it reads GPGPGGPGGAGGARGGAGGGPSGD. At R68 the chain carries Citrulline; partial. R68 bears the Omega-N-methylarginine mark.

Belongs to the neurogranin family. The N-terminus is blocked. In terms of processing, phosphorylated at Ser-36 by PHK and PKC. Phosphorylation prevents interaction with Calmodulin and interrupts several learning- and memory-associated functions. Is highly enriched in brain. Accumulates postsynaptically in dendritic spines of neostriatal neurons.

Its function is as follows. Acts as a 'third messenger' substrate of protein kinase C-mediated molecular cascades during synaptic development and remodeling. Binds to calmodulin in the absence of calcium. The chain is Neurogranin (NRGN) from Bos taurus (Bovine).